A 444-amino-acid chain; its full sequence is Deoxyguanosinetriphosphate triphosphohydrolase-like protein (444 aa).

The tract at residues methionine 1 to glutamine 26 is disordered. The 192-residue stretch at arginine 59 to alanine 250 folds into the HD domain.

Belongs to the dGTPase family. Type 2 subfamily.

This is Deoxyguanosinetriphosphate triphosphohydrolase-like protein from Shewanella sediminis (strain HAW-EB3).